The following is a 101-amino-acid chain: Urease subunit beta (101 aa).

It belongs to the urease beta subunit family. As to quaternary structure, heterotrimer of UreA (gamma), UreB (beta) and UreC (alpha) subunits. Three heterotrimers associate to form the active enzyme.

The protein resides in the cytoplasm. The catalysed reaction is urea + 2 H2O + H(+) = hydrogencarbonate + 2 NH4(+). The protein operates within nitrogen metabolism; urea degradation; CO(2) and NH(3) from urea (urease route): step 1/1. This Hahella chejuensis (strain KCTC 2396) protein is Urease subunit beta.